We begin with the raw amino-acid sequence, 1150 residues long: MAATYRLVVSTVNHYSSVVIDRRFEQAIHYCTGTCHTFTHGIDCIVVHHSVCADLLHIPVSQFKDADLNSMFLPHENGLSSAEGDYPQQAFTGIPRVKRGSTFQNTYNLKDIAGEAISFASGKIKEFSFEKLKNSNHAAYRKGRKVKSDSFNRRSVDLDLLCGHYNNDGNAPSFGLLRSSSVEEKPLSHRNSLDTNLTSMFLQNFSEEDLVTQILEKHKIDNFSSGTDIKMCLDILLKCSEDLKKCTDIIKQCIKKKSGSSISEGSGNDTISSSETVYMNVMTRLASYLKKLPFEFMQSGNNEALDLTELISNMPSLQLTPFSPVFGTEQPPKYEDVVQLSASDSGRFQTIELQNDKPNSRKMDTVQSIPNNSTNSLYNLEVNDPRTLKAVQVQSQSLTMNPLENVSSDDLMETLYIEEESDGKKALDKGQKTENGPSHELLKVNEHRAEFPEHATHLKKCPTPMQNEIGKIFEKSFVNLPKEDCKSKVSKFEEGDQRDFTNSSSQEEIDKLLMDLESFSQKMETSLREPLAKGKNSNFLNSHSQLTGQTLVDLEPKSKVSSPIEKVSPSCLTRIIETNGHKIEEEDRALLLRILESIEDFAQELVECKSSRGSLSQEKEMMQILQETLTTSSQANLSVCRSPVGDKAKDTTSAVLIQQTPEVIKIQNKPEKKPGTPLPPPATSPSSPRPLSPVPHVNNVVNAPLSINIPRFYFPEGLPDTCSNHEQTLSRIETAFMDIEEQKADIYEMGKIAKVCGCPLYWKAPMFRAAGGEKTGFVTAQSFIAMWRKLLNNHHDDASKFICLLAKPNCSSLEQEDFIPLLQDVVDTHPGLTFLKDAPEFHSRYITTVIQRIFYTVNRSWSGKITSTEIRKSNFLQTLALLEEEEDINQITDYFSYEHFYVIYCKFWELDTDHDLYISQADLSRYNDQASSSRIIERIFSGAVTRGKTIQKEGRMSYADFVWFLISEEDKRNPTSIEYWFRCMDVDGDGVLSMYELEYFYEEQCERMEAMGIEPLPFHDLLCQMLDLVKPAVDGKITLRDLKRCRMAHIFYDTFFNLEKYLDHEQRDPFAVQKDVENDGPEPSDWDRFAAEEYETLVAEESAQAQFQEGFEDYETDEPASPSEFGNKSNKILSASLPEKCGKLQSVDEE.

The tract at residues 661 to 693 is disordered; sequence PEVIKIQNKPEKKPGTPLPPPATSPSSPRPLSP. The span at 676-693 shows a compositional bias: pro residues; sequence TPLPPPATSPSSPRPLSP. EF-hand domains lie at 758-793 and 972-1007; these read CPLYWKAPMFRAAGGEKTGFVTAQSFIAMWRKLLNN and RNPTSIEYWFRCMDVDGDGVLSMYELEYFYEEQCER. Residues Asp-985, Asp-987, Asp-989, and Glu-996 each contribute to the Ca(2+) site. Positions 1105 to 1132 are disordered; sequence AQFQEGFEDYETDEPASPSEFGNKSNKI.

In terms of assembly, PP2A consists of a common heterodimeric core enzyme, composed of a 36 kDa catalytic subunit (subunit C) and a 65 kDa constant regulatory subunit (PR65 or subunit A), that associates with a variety of regulatory subunits. Proteins that associate with the core dimer include three families of regulatory subunits B (the R2/B/PR55/B55, R3/B''/PR72/PR130/PR59 and R5/B'/B56 families), the 48 kDa variable regulatory subunit, viral proteins, and cell signaling molecules. Expressed in heart, brain, placenta, lung, muscle and kidney.

Functionally, the B regulatory subunit might modulate substrate selectivity and catalytic activity, and might also direct the localization of the catalytic enzyme to a particular subcellular compartment. This Homo sapiens (Human) protein is Serine/threonine-protein phosphatase 2A regulatory subunit B'' subunit alpha (PPP2R3A).